The sequence spans 66 residues: Ribosome biogenesis protein Nop10 (66 aa).

Belongs to the NOP10 family.

Functionally, involved in ribosome biogenesis; more specifically in 18S rRNA pseudouridylation and in cleavage of pre-rRNA. This chain is Ribosome biogenesis protein Nop10, found in Desulfurococcus amylolyticus (strain DSM 18924 / JCM 16383 / VKM B-2413 / 1221n) (Desulfurococcus kamchatkensis).